The sequence spans 253 residues: Small ribosomal subunit protein eS6 (253 aa).

The segment at 200-253 is disordered; it reads KKRLAKRKQSENDYAKLLAQRKKESKVRRQEELKRRRSASMRDSKSSDKSAPQK. Residues 226–247 are compositionally biased toward basic and acidic residues; that stretch reads VRRQEELKRRRSASMRDSKSSD.

It belongs to the eukaryotic ribosomal protein eS6 family. As to quaternary structure, component of the small ribosomal subunit. Part of the small subunit (SSU) processome, composed of more than 70 proteins and the RNA chaperone small nucleolar RNA (snoRNA) U3. In terms of processing, ribosomal protein S6 is the major substrate of protein kinases in eukaryote ribosomes.

The protein resides in the cytoplasm. The protein localises to the nucleus. Its subcellular location is the nucleolus. Functionally, component of the 40S small ribosomal subunit. Plays an important role in controlling cell growth and proliferation through the selective translation of particular classes of mRNA. Part of the small subunit (SSU) processome, first precursor of the small eukaryotic ribosomal subunit. During the assembly of the SSU processome in the nucleolus, many ribosome biogenesis factors, an RNA chaperone and ribosomal proteins associate with the nascent pre-rRNA and work in concert to generate RNA folding, modifications, rearrangements and cleavage as well as targeted degradation of pre-ribosomal RNA by the RNA exosome. This chain is Small ribosomal subunit protein eS6 (RpS6), found in Spodoptera frugiperda (Fall armyworm).